Reading from the N-terminus, the 383-residue chain is Agmatine deiminase (383 aa).

Positions 220 and 226 each coordinate agmatine. Catalysis depends on Cys-366, which acts as the Amidino-cysteine intermediate.

This sequence belongs to the agmatine deiminase family. In terms of assembly, forms homodimers.

The enzyme catalyses agmatine + H2O = N-carbamoylputrescine + NH4(+). The protein operates within amine and polyamine biosynthesis; putrescine biosynthesis via agmatine pathway; N-carbamoylputrescine from agmatine: step 1/1. With respect to regulation, inhibited by N-ethylmaleimide and iodoacetamide. Functionally, mediates the hydrolysis of agmatine into N-carbamoylputrescine in the arginine decarboxylase (ADC) pathway of putrescine biosynthesis, a basic polyamine. This chain is Agmatine deiminase (AIH), found in Arabidopsis thaliana (Mouse-ear cress).